Reading from the N-terminus, the 585-residue chain is Serine protease HtrA-like (585 aa).

Positions Met-1–Thr-184 are disordered. The span at Tyr-21–Tyr-82 shows a compositional bias: basic and acidic residues. Residues Gln-84–Asn-94 are compositionally biased toward polar residues. Residues Lys-95–Val-113 show a composition bias toward basic and acidic residues. Residues Ser-114 to Asn-124 show a composition bias toward polar residues. A compositionally biased stretch (basic and acidic residues) spans Ser-126–Gln-139. The segment covering Gly-151–Gln-175 has biased composition (polar residues). The helical transmembrane segment at Met-224–Val-244 threads the bilayer. Active-site charge relay system residues include His-320, Asp-350, and Ser-435. The PDZ domain occupies Gly-516 to Gly-575.

Belongs to the peptidase S1C family.

It localises to the cell membrane. This Staphylococcus epidermidis (strain ATCC 35984 / DSM 28319 / BCRC 17069 / CCUG 31568 / BM 3577 / RP62A) protein is Serine protease HtrA-like.